We begin with the raw amino-acid sequence, 230 residues long: MRLDVVTIFPEYLEPLRAALLGKAIDKGLISVEVHDLRDWTHDVHKAVDDSPYGGGPGMVMKPTVWGPALDDVLAAGDGDTDTLLVVPTPAGVPFTQATAERWAGEKRIVFACGRYEGIDQRVFDDAARRVRVEEVSIGDYVLIGGEAAVLVMTEAFVRLIPGVLGNQQSHQEDSFSDGLLEGPSYTRPATWRGLDVPPVLLSGDHAKVAAWRREQSLQRTAERRPDLLP.

Residues glycine 114 and 138–143 (IGDYVL) contribute to the S-adenosyl-L-methionine site.

The protein belongs to the RNA methyltransferase TrmD family. As to quaternary structure, homodimer.

Its subcellular location is the cytoplasm. It catalyses the reaction guanosine(37) in tRNA + S-adenosyl-L-methionine = N(1)-methylguanosine(37) in tRNA + S-adenosyl-L-homocysteine + H(+). Functionally, specifically methylates guanosine-37 in various tRNAs. The sequence is that of tRNA (guanine-N(1)-)-methyltransferase from Rhodococcus jostii (strain RHA1).